Here is a 325-residue protein sequence, read N- to C-terminus: Beta-lactamase 1 (325 aa).

Residues 1–26 (MRIRPTRRLLLGAVAPLALVPLVACG) form the signal peptide. The disordered stretch occupies residues 30 to 50 (GSESGQQPGLGGCGTSAHGSA). Serine 93 acts as the Acyl-ester intermediate in catalysis. Position 270 to 272 (270 to 272 (KSG)) interacts with substrate.

Belongs to the class-A beta-lactamase family.

The catalysed reaction is a beta-lactam + H2O = a substituted beta-amino acid. The sequence is that of Beta-lactamase 1 (blaL) from Streptomyces cacaoi.